The sequence spans 188 residues: dCTP deaminase (188 aa).

DCTP contacts are provided by residues 111–116 (KSTYAR), 135–137 (TLE), Q156, Y170, and Q180. E137 serves as the catalytic Proton donor/acceptor.

It belongs to the dCTP deaminase family. Homotrimer.

The enzyme catalyses dCTP + H2O + H(+) = dUTP + NH4(+). It participates in pyrimidine metabolism; dUMP biosynthesis; dUMP from dCTP (dUTP route): step 1/2. Catalyzes the deamination of dCTP to dUTP. This Pseudomonas fluorescens (strain Pf0-1) protein is dCTP deaminase.